We begin with the raw amino-acid sequence, 104 residues long: Antitoxin HigA-2 (104 aa).

The HTH cro/C1-type domain occupies 45–98 (IVSIREQFNMSRGVFARLLHTSSRTLENWEQGRSVPNGQAVTLLKLVQRHPETL). The H-T-H motif DNA-binding region spans 56-75 (RGVFARLLHTSSRTLENWEQ).

Antitoxin component of a type II toxin-antitoxin (TA) system that counteracts the effect of the HigB-2 toxin. Binds to its own promoter and regulates transcription of the higB-2/higA-2 operon. The chain is Antitoxin HigA-2 (higA-2) from Vibrio cholerae serotype O1 (strain ATCC 39315 / El Tor Inaba N16961).